The sequence spans 107 residues: Integration host factor subunit beta (107 aa).

Residues Phe-76–Arg-107 are disordered. The span at Pro-82–Asp-101 shows a compositional bias: basic and acidic residues.

Belongs to the bacterial histone-like protein family. As to quaternary structure, heterodimer of an alpha and a beta chain.

This protein is one of the two subunits of integration host factor, a specific DNA-binding protein that functions in genetic recombination as well as in transcriptional and translational control. This is Integration host factor subunit beta from Burkholderia cenocepacia (strain HI2424).